A 339-amino-acid polypeptide reads, in one-letter code: Heat-inducible transcription repressor HrcA (339 aa).

It belongs to the HrcA family.

In terms of biological role, negative regulator of class I heat shock genes (grpE-dnaK-dnaJ and groELS operons). Prevents heat-shock induction of these operons. This Nitrosospira multiformis (strain ATCC 25196 / NCIMB 11849 / C 71) protein is Heat-inducible transcription repressor HrcA.